A 463-amino-acid chain; its full sequence is Glutathione amide reductase (463 aa).

3 residues coordinate Ni(2+): threonine 2, glutamine 3, and histidine 4. FAD-binding positions include 14-15, glutamate 34, and threonine 41; that span reads SG. The cysteines at positions 42 and 47 are disulfide-linked. FAD-binding positions include lysine 50 and 113 to 114; that span reads HA. Lysine 50 serves as a coordination point for NAD(+). Residues 174-180, 197-198, valine 230, and glycine 261 each bind NAD(+); these read AGYIGIE and LE. Residues aspartate 302 and 308 to 310 contribute to the FAD site; that span reads QLT. 2 residues coordinate NAD(+): glutamine 308 and valine 341. Histidine 437 contributes to the FAD binding site. Histidine 437 acts as the Proton acceptor in catalysis.

Belongs to the class-I pyridine nucleotide-disulfide oxidoreductase family. Homodimer. FAD is required as a cofactor.

The catalysed reaction is 2 glutathione amide + NAD(+) = glutathione amide disulfide + NADH + H(+). Its function is as follows. Catalyzes the reduction of glutathione amide disulfide (GASSAG) to restore glutathione amide (GASH) in the presence of NADH. May play a role in GASH metabolism under anaerobic conditions as a sulfide carrier necessary for cytoplasmic sulfide oxidation. This is Glutathione amide reductase from Marichromatium gracile (Chromatium gracile).